The sequence spans 415 residues: Isocitrate dehydrogenase [NADP] 1 (415 aa).

Position 104 (Thr-104) interacts with NADP(+). Ser-113, Asn-115, Arg-119, Arg-129, and Arg-153 together coordinate D-threo-isocitrate. Position 307 (Asp-307) interacts with Mg(2+). NADP(+) contacts are provided by residues 339-345 (HGTAPKY), Asn-352, Tyr-390, and Arg-394.

It belongs to the isocitrate and isopropylmalate dehydrogenases family. As to quaternary structure, homodimer. Requires Mg(2+) as cofactor. The cofactor is Mn(2+).

The catalysed reaction is D-threo-isocitrate + NADP(+) = 2-oxoglutarate + CO2 + NADPH. Catalyzes the oxidative decarboxylation of isocitrate to 2-oxoglutarate and carbon dioxide with the concomitant reduction of NADP(+). The polypeptide is Isocitrate dehydrogenase [NADP] 1 (Colwellia maris).